Consider the following 344-residue polypeptide: Sorting nexin-16 (344 aa).

The span at 1–10 shows a compositional bias: pro residues; it reads MATPYVPVPM. 2 disordered regions span residues 1–66 and 81–107; these read MATP…NTSS and ASSI…EDRP. A compositionally biased stretch (polar residues) spans 14–26; it reads NSASSFTTNRNQR. Residues 27-40 are compositionally biased toward low complexity; sequence SSSFGSVSTSSNSS. Positions 41–66 are enriched in polar residues; the sequence is KGQLEDSNMGNFKQTSVPDQMDNTSS. Positions 105–218 constitute a PX domain; sequence DRPSTPTILG…EFLCLDDPPG (114 aa). A 1,2-diacyl-sn-glycero-3-phospho-(1D-myo-inositol-3-phosphate)-binding residues include Arg144, Thr146, and Arg184. A Phosphoserine modification is found at Ser222. Residues 223–278 are a coiled coil; the sequence is LEESRAFCETLEETNYRLQKELLEKQKEMESLKKLLSEKQLHIDTLENRIRTLSLE.

Belongs to the sorting nexin family. As to quaternary structure, homooligomer. Interacts with EGFR. In terms of tissue distribution, detected in placenta, lung, liver,heart and pancreas.

It localises to the early endosome membrane. Its subcellular location is the late endosome membrane. The protein resides in the cytoplasm. The protein localises to the lysosome. Functionally, may be involved in several stages of intracellular trafficking. Plays a role in protein transport from early to late endosomes. Plays a role in protein transport to the lysosome. Promotes degradation of EGFR after EGF signaling. Plays a role in intracellular transport of vesicular stomatitis virus nucleocapsids from the endosome to the cytoplasm. The chain is Sorting nexin-16 (SNX16) from Homo sapiens (Human).